Here is a 93-residue protein sequence, read N- to C-terminus: Phosphoribosyl-ATP pyrophosphatase (93 aa).

The protein belongs to the PRA-PH family.

Its subcellular location is the cytoplasm. It carries out the reaction 1-(5-phospho-beta-D-ribosyl)-ATP + H2O = 1-(5-phospho-beta-D-ribosyl)-5'-AMP + diphosphate + H(+). The protein operates within amino-acid biosynthesis; L-histidine biosynthesis; L-histidine from 5-phospho-alpha-D-ribose 1-diphosphate: step 2/9. In Rhodococcus erythropolis (strain PR4 / NBRC 100887), this protein is Phosphoribosyl-ATP pyrophosphatase.